Reading from the N-terminus, the 306-residue chain is tRNA dimethylallyltransferase (306 aa).

11-18 provides a ligand contact to ATP; the sequence is APTAAGKT. Residue 13–18 participates in substrate binding; that stretch reads TAAGKT.

It belongs to the IPP transferase family. As to quaternary structure, monomer. The cofactor is Mg(2+).

It carries out the reaction adenosine(37) in tRNA + dimethylallyl diphosphate = N(6)-dimethylallyladenosine(37) in tRNA + diphosphate. Its function is as follows. Catalyzes the transfer of a dimethylallyl group onto the adenine at position 37 in tRNAs that read codons beginning with uridine, leading to the formation of N6-(dimethylallyl)adenosine (i(6)A). The chain is tRNA dimethylallyltransferase from Deinococcus radiodurans (strain ATCC 13939 / DSM 20539 / JCM 16871 / CCUG 27074 / LMG 4051 / NBRC 15346 / NCIMB 9279 / VKM B-1422 / R1).